Consider the following 433-residue polypeptide: Cysteine--tRNA ligase (433 aa).

Cysteine 4 contacts Zn(2+). The short motif at 6 to 16 is the 'HIGH' region element; it reads PTVYDTAHIGN. Residues cysteine 188, histidine 213, and glutamate 217 each contribute to the Zn(2+) site. Positions 246–250 match the 'KMSKS' region motif; sequence KMSKS. Residue lysine 249 participates in ATP binding.

Belongs to the class-I aminoacyl-tRNA synthetase family. Monomer. Requires Zn(2+) as cofactor.

It localises to the cytoplasm. It catalyses the reaction tRNA(Cys) + L-cysteine + ATP = L-cysteinyl-tRNA(Cys) + AMP + diphosphate. This is Cysteine--tRNA ligase from Wolbachia sp. subsp. Brugia malayi (strain TRS).